The following is a 544-amino-acid chain: Chaperonin GroEL (544 aa).

ATP is bound by residues 30–33 (TLGP), Lys-51, 87–91 (DGTTT), Gly-415, 479–481 (NAA), and Asp-495.

The protein belongs to the chaperonin (HSP60) family. As to quaternary structure, forms a cylinder of 14 subunits composed of two heptameric rings stacked back-to-back. Interacts with the co-chaperonin GroES.

It is found in the cytoplasm. It catalyses the reaction ATP + H2O + a folded polypeptide = ADP + phosphate + an unfolded polypeptide.. Functionally, together with its co-chaperonin GroES, plays an essential role in assisting protein folding. The GroEL-GroES system forms a nano-cage that allows encapsulation of the non-native substrate proteins and provides a physical environment optimized to promote and accelerate protein folding. The protein is Chaperonin GroEL of Francisella tularensis subsp. tularensis (strain WY96-3418).